A 302-amino-acid polypeptide reads, in one-letter code: ATP synthase gamma chain (302 aa).

The protein belongs to the ATPase gamma chain family. In terms of assembly, F-type ATPases have 2 components, CF(1) - the catalytic core - and CF(0) - the membrane proton channel. CF(1) has five subunits: alpha(3), beta(3), gamma(1), delta(1), epsilon(1). CF(0) has three main subunits: a, b and c.

The protein localises to the cell membrane. In terms of biological role, produces ATP from ADP in the presence of a proton gradient across the membrane. The gamma chain is believed to be important in regulating ATPase activity and the flow of protons through the CF(0) complex. This Kineococcus radiotolerans (strain ATCC BAA-149 / DSM 14245 / SRS30216) protein is ATP synthase gamma chain.